Reading from the N-terminus, the 284-residue chain is MEMO1 family protein YN1551_0739 (284 aa).

The protein belongs to the MEMO1 family.

The polypeptide is MEMO1 family protein YN1551_0739 (Saccharolobus islandicus (strain Y.N.15.51 / Yellowstone #2) (Sulfolobus islandicus)).